The primary structure comprises 84 residues: Antimicrobial peptide MeuNaTxbeta-2 (84 aa).

A signal peptide spans 1–20; it reads MMKTVIVLIVFSLVMIVVKS. Residues 21–83 form the LCN-type CS-alpha/beta domain; that stretch reads DNGYLLDKYT…LWHYETNRCR (63 aa). Intrachain disulfides connect Cys-32–Cys-82, Cys-36–Cys-57, Cys-43–Cys-64, and Cys-47–Cys-66.

As to expression, expressed by the venom gland.

The protein localises to the secreted. Functionally, antimicrobial peptide with activity against both Gram-positive and -negative bacteria. This is Antimicrobial peptide MeuNaTxbeta-2 from Mesobuthus eupeus (Lesser Asian scorpion).